The sequence spans 387 residues: uncharacterized protein (387 aa).

The protein resides in the mitochondrion. This is an uncharacterized protein from Paramecium tetraurelia.